The following is a 280-amino-acid chain: Ribosomal protein L11 methyltransferase (280 aa).

S-adenosyl-L-methionine contacts are provided by Thr-130, Gly-151, Asp-172, and Asn-213.

It belongs to the methyltransferase superfamily. PrmA family.

The protein resides in the cytoplasm. It catalyses the reaction L-lysyl-[protein] + 3 S-adenosyl-L-methionine = N(6),N(6),N(6)-trimethyl-L-lysyl-[protein] + 3 S-adenosyl-L-homocysteine + 3 H(+). Methylates ribosomal protein L11. This chain is Ribosomal protein L11 methyltransferase, found in Nitratiruptor sp. (strain SB155-2).